The sequence spans 899 residues: Auxin response factor 25 (899 aa).

A disordered region spans residues 1 to 20 (MKLSPPASADMPQALPENDG). Positions 132-234 (FCKTLTASDT…QLLLGIRRAN (103 aa)) form a DNA-binding region, TF-B3. The segment covering 546–564 (RQHVLQEQSSQEMQQQLPS) has biased composition (low complexity). A disordered region spans residues 546-586 (RQHVLQEQSSQEMQQQLPSSDHHVADVASESGSAPQAQSSL). Residues 575–586 (ESGSAPQAQSSL) are compositionally biased toward polar residues. Positions 766–850 (ATFVKVYKSG…WCIKILSPQE (85 aa)) constitute a PB1 domain.

It belongs to the ARF family. In terms of assembly, homodimers and heterodimers. In terms of tissue distribution, expressed in roots, culms, leaves and young panicles.

It localises to the nucleus. Functionally, auxin response factors (ARFs) are transcriptional factors that bind specifically to the DNA sequence 5'-TGTCTC-3' found in the auxin-responsive promoter elements (AuxREs). The protein is Auxin response factor 25 (ARF25) of Oryza sativa subsp. japonica (Rice).